A 344-amino-acid polypeptide reads, in one-letter code: Glutamine synthetase (344 aa).

Residues tyrosine 4–glycine 86 form the GS beta-grasp domain. A GS catalytic domain is found at proline 89–alanine 344. Residues glutamate 109 and glutamate 111 each coordinate Mg(2+). Glutamate 167 lines the ATP pocket. Positions 172 and 179 each coordinate Mg(2+). Glutamate 278 serves as a coordination point for L-glutamate.

It belongs to the glutamine synthetase family. As to quaternary structure, homooctamer and homotetramer. Mg(2+) is required as a cofactor.

Its subcellular location is the cytoplasm. It catalyses the reaction L-glutamate + NH4(+) + ATP = L-glutamine + ADP + phosphate + H(+). In terms of biological role, catalyzes the ATP-dependent biosynthesis of glutamine from glutamate and ammonia. The sequence is that of Glutamine synthetase from Bradyrhizobium diazoefficiens (strain JCM 10833 / BCRC 13528 / IAM 13628 / NBRC 14792 / USDA 110).